Reading from the N-terminus, the 173-residue chain is Protein-export protein SecB (173 aa).

It belongs to the SecB family. In terms of assembly, homotetramer, a dimer of dimers. One homotetramer interacts with 1 SecA dimer.

Its subcellular location is the cytoplasm. Its function is as follows. One of the proteins required for the normal export of preproteins out of the cell cytoplasm. It is a molecular chaperone that binds to a subset of precursor proteins, maintaining them in a translocation-competent state. It also specifically binds to its receptor SecA. This Ralstonia nicotianae (strain ATCC BAA-1114 / GMI1000) (Ralstonia solanacearum) protein is Protein-export protein SecB.